The following is a 144-amino-acid chain: Large ribosomal subunit protein uL16 (144 aa).

It belongs to the universal ribosomal protein uL16 family. Part of the 50S ribosomal subunit.

Functionally, binds 23S rRNA and is also seen to make contacts with the A and possibly P site tRNAs. In Thermoanaerobacter sp. (strain X514), this protein is Large ribosomal subunit protein uL16.